A 441-amino-acid chain; its full sequence is Serine carboxypeptidase-like 1 (441 aa).

Residues 1–29 (MANKYVSSVLKSLLVLLHLVFLSKQHVDS) form the signal peptide. 3 cysteine pairs are disulfide-bonded: Cys88–Cys331, Cys252–Cys266, and Cys290–Cys297. N-linked (GlcNAc...) asparagine glycosylation occurs at Asn109. Residue Ser184 is part of the active site. A glycan (N-linked (GlcNAc...) asparagine) is linked at Asn350. Residue Asp366 is part of the active site. A glycan (N-linked (GlcNAc...) asparagine) is linked at Asn382. His419 is a catalytic residue.

It belongs to the peptidase S10 family. Expressed in seedlings and roots.

Its subcellular location is the secreted. Its function is as follows. Probable carboxypeptidase. In Arabidopsis thaliana (Mouse-ear cress), this protein is Serine carboxypeptidase-like 1 (SCPL1).